A 110-amino-acid polypeptide reads, in one-letter code: Iron-sulfur cluster assembly protein CyaY (110 aa).

Belongs to the frataxin family.

Its function is as follows. Involved in iron-sulfur (Fe-S) cluster assembly. May act as a regulator of Fe-S biogenesis. The sequence is that of Iron-sulfur cluster assembly protein CyaY from Pseudomonas putida (strain W619).